A 500-amino-acid chain; its full sequence is Beta-glucosidase 28 (500 aa).

The signal sequence occupies residues 1-24; that stretch reads MDRRLLLSALLFIALACSSNRVHG. An a beta-D-glucoside-binding site is contributed by Gln-45. N-linked (GlcNAc...) asparagine glycosylation occurs at Asn-111. A beta-D-glucoside contacts are provided by residues His-146 and 191–192; that span reads NE. Glu-192 functions as the Proton donor in the catalytic mechanism. A disulfide bridge connects residues Cys-211 and Cys-219. Residue Tyr-337 participates in a beta-D-glucoside binding. A glycan (N-linked (GlcNAc...) asparagine) is linked at Asn-362. Glu-408 is a binding site for a beta-D-glucoside. Glu-408 serves as the catalytic Nucleophile. 3 N-linked (GlcNAc...) asparagine glycosylation sites follow: Asn-409, Asn-415, and Asn-416. A beta-D-glucoside contacts are provided by residues Trp-457, 464-465, and Phe-473; that span reads EF.

Belongs to the glycosyl hydrolase 1 family.

The catalysed reaction is Hydrolysis of terminal, non-reducing beta-D-glucosyl residues with release of beta-D-glucose.. In Oryza sativa subsp. japonica (Rice), this protein is Beta-glucosidase 28 (BGLU28).